The sequence spans 126 residues: Aspartate 1-decarboxylase (126 aa).

Ser-25 functions as the Schiff-base intermediate with substrate; via pyruvic acid in the catalytic mechanism. A Pyruvic acid (Ser) modification is found at Ser-25. Thr-57 serves as a coordination point for substrate. Residue Tyr-58 is the Proton donor of the active site. Gly-73 to Ala-75 serves as a coordination point for substrate.

This sequence belongs to the PanD family. As to quaternary structure, heterooctamer of four alpha and four beta subunits. The cofactor is pyruvate. Post-translationally, is synthesized initially as an inactive proenzyme, which is activated by self-cleavage at a specific serine bond to produce a beta-subunit with a hydroxyl group at its C-terminus and an alpha-subunit with a pyruvoyl group at its N-terminus.

It is found in the cytoplasm. It catalyses the reaction L-aspartate + H(+) = beta-alanine + CO2. Its pathway is cofactor biosynthesis; (R)-pantothenate biosynthesis; beta-alanine from L-aspartate: step 1/1. Catalyzes the pyruvoyl-dependent decarboxylation of aspartate to produce beta-alanine. In Xylella fastidiosa (strain M12), this protein is Aspartate 1-decarboxylase.